The following is a 324-amino-acid chain: HPr kinase/phosphorylase (324 aa).

Active-site residues include H146 and K167. ATP is bound at residue 161–168 (GDSGLGKS). A Mg(2+)-binding site is contributed by S168. The active-site Proton acceptor; for phosphorylation activity. Proton donor; for dephosphorylation activity is D185. The tract at residues 209–218 (LEVRGLGLLD) is important for the catalytic mechanism of both phosphorylation and dephosphorylation. E210 lines the Mg(2+) pocket. R250 is a catalytic residue. The important for the catalytic mechanism of dephosphorylation stretch occupies residues 271 to 276 (QVAAGR).

The protein belongs to the HPrK/P family. Homohexamer. Mg(2+) is required as a cofactor.

The enzyme catalyses [HPr protein]-L-serine + ATP = [HPr protein]-O-phospho-L-serine + ADP + H(+). The catalysed reaction is [HPr protein]-O-phospho-L-serine + phosphate + H(+) = [HPr protein]-L-serine + diphosphate. In terms of biological role, catalyzes the ATP- as well as the pyrophosphate-dependent phosphorylation of a specific serine residue in HPr, a phosphocarrier protein of the phosphoenolpyruvate-dependent sugar phosphotransferase system (PTS). HprK/P also catalyzes the pyrophosphate-producing, inorganic phosphate-dependent dephosphorylation (phosphorolysis) of seryl-phosphorylated HPr (P-Ser-HPr). The polypeptide is HPr kinase/phosphorylase (Ralstonia nicotianae (strain ATCC BAA-1114 / GMI1000) (Ralstonia solanacearum)).